The following is a 191-amino-acid chain: Probable GTP-binding protein EngB (191 aa).

An EngB-type G domain is found at 22 to 190 (RLPEIAFLGR…WQAITTTLQA (169 aa)). GTP is bound by residues 30–37 (GRSNVGKS), 57–61 (GRTQT), 75–78 (DLPG), 142–145 (TKTD), and 169–171 (FSA). Mg(2+) contacts are provided by serine 37 and threonine 59.

This sequence belongs to the TRAFAC class TrmE-Era-EngA-EngB-Septin-like GTPase superfamily. EngB GTPase family. Mg(2+) is required as a cofactor.

In terms of biological role, necessary for normal cell division and for the maintenance of normal septation. The chain is Probable GTP-binding protein EngB from Solibacter usitatus (strain Ellin6076).